Consider the following 294-residue polypeptide: 4-hydroxy-tetrahydrodipicolinate synthase (294 aa).

Threonine 48 is a binding site for pyruvate. The active-site Proton donor/acceptor is the tyrosine 136. The active-site Schiff-base intermediate with substrate is the lysine 164. Residue valine 206 participates in pyruvate binding.

It belongs to the DapA family. In terms of assembly, homotetramer; dimer of dimers.

It localises to the cytoplasm. It catalyses the reaction L-aspartate 4-semialdehyde + pyruvate = (2S,4S)-4-hydroxy-2,3,4,5-tetrahydrodipicolinate + H2O + H(+). It functions in the pathway amino-acid biosynthesis; L-lysine biosynthesis via DAP pathway; (S)-tetrahydrodipicolinate from L-aspartate: step 3/4. Its function is as follows. Catalyzes the condensation of (S)-aspartate-beta-semialdehyde [(S)-ASA] and pyruvate to 4-hydroxy-tetrahydrodipicolinate (HTPA). In Desulforudis audaxviator (strain MP104C), this protein is 4-hydroxy-tetrahydrodipicolinate synthase.